A 3184-amino-acid chain; its full sequence is Probable serine/threonine-protein kinase pats1 (3184 aa).

Positions aspartate 369–serine 378 are enriched in pro residues. 2 disordered regions span residues aspartate 369 to proline 516 and serine 913 to leucine 1013. The span at serine 379–asparagine 415 shows a compositional bias: low complexity. Positions aspartate 421–proline 450 are enriched in polar residues. The segment covering asparagine 451–serine 512 has biased composition (low complexity). Positions cysteine 842–phenylalanine 1348 constitute a Myotubularin phosphatase domain. Positions serine 913 to proline 934 are enriched in polar residues. The span at asparagine 935 to asparagine 993 shows a compositional bias: low complexity. The segment covering serine 1000–leucine 1013 has biased composition (polar residues). LRR repeat units lie at residues phenylalanine 1391 to tyrosine 1412, glycine 1416 to valine 1438, lysine 1439 to leucine 1460, serine 1467 to phenylalanine 1488, serine 1491 to leucine 1512, asparagine 1514 to isoleucine 1535, lysine 1541 to lysine 1563, serine 1564 to leucine 1585, asparagine 1587 to leucine 1608, asparagine 1610 to leucine 1631, lysine 1633 to leucine 1654, glutamine 1656 to leucine 1678, and asparagine 1680 to leucine 1701. Positions glycine 1716 to glutamine 1910 constitute a Roc domain. Residues glycine 1716–glutamine 1910 form a small GTPase-like region. GTP contacts are provided by residues glycine 1729–threonine 1736, aspartate 1797–glutamine 1801, and threonine 1854–aspartate 1857. The 210-residue stretch at proline 1918–leucine 2127 folds into the COR domain. In terms of domain architecture, Protein kinase spans leucine 2247 to phenylalanine 2519. ATP-binding positions include isoleucine 2253–valine 2261 and lysine 2274. Catalysis depends on aspartate 2379, which acts as the Proton acceptor. 2 disordered regions span residues tyrosine 2528–histidine 2609 and asparagine 2652–leucine 2671. Low complexity predominate over residues glutamine 2529–serine 2555. Polar residues predominate over residues leucine 2556–isoleucine 2576. 5 WD repeats span residues proline 2745–glutamine 2785, alanine 2790–serine 2829, alanine 2909–glutamate 2947, alanine 2949–glutamate 2986, and lysine 2990–serine 3040. A compositionally biased stretch (low complexity) spans glycine 3055–serine 3126. The interval glycine 3055–glutamine 3164 is disordered. Polar residues predominate over residues histidine 3141–proline 3157.

Belongs to the protein kinase superfamily. TKL Ser/Thr protein kinase family. ROCO subfamily.

It catalyses the reaction L-seryl-[protein] + ATP = O-phospho-L-seryl-[protein] + ADP + H(+). The enzyme catalyses L-threonyl-[protein] + ATP = O-phospho-L-threonyl-[protein] + ADP + H(+). Functionally, may act as a serine/threonine-protein kinase and guanine-nucleotide releasing factor. Essential regulator of cytokinesis involved in the binding to actomyosin cytoskeleton. This Dictyostelium discoideum (Social amoeba) protein is Probable serine/threonine-protein kinase pats1 (pats1).